The primary structure comprises 175 residues: uncharacterized protein (175 aa).

An N-terminal signal peptide occupies residues 1–23; the sequence is MILVLLLILIAFLYIYFPSSLNQ.

This is an uncharacterized protein from Invertebrate iridescent virus 6 (IIV-6).